Here is a 453-residue protein sequence, read N- to C-terminus: Ribosomal protein uS12 methylthiotransferase RimO (453 aa).

An MTTase N-terminal domain is found at 5–120 (PKVGFVSLGC…VMQAVHSHLP (116 aa)). Positions 14, 50, 79, 151, 155, and 158 each coordinate [4Fe-4S] cluster. Residues 137 to 382 (LTPRHYAYLK…MEVAEEVSAR (246 aa)) form the Radical SAM core domain. A TRAM domain is found at 385-453 (ARKVGKTLKV…ADGHDLWGEV (69 aa)).

The protein belongs to the methylthiotransferase family. RimO subfamily. [4Fe-4S] cluster serves as cofactor.

It localises to the cytoplasm. It catalyses the reaction L-aspartate(89)-[ribosomal protein uS12]-hydrogen + (sulfur carrier)-SH + AH2 + 2 S-adenosyl-L-methionine = 3-methylsulfanyl-L-aspartate(89)-[ribosomal protein uS12]-hydrogen + (sulfur carrier)-H + 5'-deoxyadenosine + L-methionine + A + S-adenosyl-L-homocysteine + 2 H(+). In terms of biological role, catalyzes the methylthiolation of an aspartic acid residue of ribosomal protein uS12. This is Ribosomal protein uS12 methylthiotransferase RimO from Burkholderia multivorans (strain ATCC 17616 / 249).